Consider the following 41-residue polypeptide: Photosystem I reaction center subunit IX (41 aa).

The helical transmembrane segment at Tyr7–Ile27 threads the bilayer.

Belongs to the PsaJ family.

Its subcellular location is the plastid. The protein localises to the chloroplast thylakoid membrane. May help in the organization of the PsaE and PsaF subunits. This Chara vulgaris (Common stonewort) protein is Photosystem I reaction center subunit IX.